The following is an 884-amino-acid chain: DNA mismatch repair protein MutS (884 aa).

651–658 (GPNMSGKS) is a binding site for ATP. The interval 843–884 (LRNQGKSQPAQKNCKKEPAPNRSPDPAVGDQLSLIPAPLFPD) is disordered.

The protein belongs to the DNA mismatch repair MutS family.

This protein is involved in the repair of mismatches in DNA. It is possible that it carries out the mismatch recognition step. This protein has a weak ATPase activity. The polypeptide is DNA mismatch repair protein MutS (Synechococcus sp. (strain JA-2-3B'a(2-13)) (Cyanobacteria bacterium Yellowstone B-Prime)).